We begin with the raw amino-acid sequence, 260 residues long: 2-amino-5-formylamino-6-ribosylaminopyrimidin-4(3H)-one 5'-monophosphate deformylase (260 aa).

Positions 33, 35, 44, and 112 each coordinate Fe cation.

This sequence belongs to the creatininase superfamily. FAPy deformylase family. Homodimer. The cofactor is Fe(2+). Zn(2+) serves as cofactor.

It carries out the reaction 2-amino-5-formylamino-6-(5-phospho-D-ribosylamino)pyrimidin-4(3H)-one + H2O = 2,5-diamino-6-(1-D-ribosylamino)pyrimidin-4(3H)-one 5'-phosphate + formate + H(+). Its pathway is cofactor biosynthesis; coenzyme F420 biosynthesis. It participates in cofactor biosynthesis; riboflavin biosynthesis. In terms of biological role, catalyzes the hydrolysis of the formamide of 2-amino-5-formylamino-6-ribosylamino-4(3H)-pyrimidinone 5'-monophosphate (FAPy) to form 2,5-diamino-6-ribosylamino-4(3H)-pyrimidinone 5'-phosphate (APy). In Methanococcus voltae (strain ATCC BAA-1334 / A3), this protein is 2-amino-5-formylamino-6-ribosylaminopyrimidin-4(3H)-one 5'-monophosphate deformylase.